The following is a 174-amino-acid chain: Peptide methionine sulfoxide reductase MsrA (174 aa).

Cysteine 10 is a catalytic residue.

The protein belongs to the MsrA Met sulfoxide reductase family.

It carries out the reaction L-methionyl-[protein] + [thioredoxin]-disulfide + H2O = L-methionyl-(S)-S-oxide-[protein] + [thioredoxin]-dithiol. The enzyme catalyses [thioredoxin]-disulfide + L-methionine + H2O = L-methionine (S)-S-oxide + [thioredoxin]-dithiol. Its function is as follows. Has an important function as a repair enzyme for proteins that have been inactivated by oxidation. Catalyzes the reversible oxidation-reduction of methionine sulfoxide in proteins to methionine. This is Peptide methionine sulfoxide reductase MsrA from Acinetobacter baumannii (strain SDF).